The primary structure comprises 326 residues: DNA-directed RNA polymerase subunit alpha (326 aa).

Residues 1–231 (MQSNSLLKPR…DQLSVFADLE (231 aa)) form an alpha N-terminal domain (alpha-NTD) region. Residues 245–326 (IDPVLLRPVD…WPPAGLEKLG (82 aa)) form an alpha C-terminal domain (alpha-CTD) region.

It belongs to the RNA polymerase alpha chain family. As to quaternary structure, homodimer. The RNAP catalytic core consists of 2 alpha, 1 beta, 1 beta' and 1 omega subunit. When a sigma factor is associated with the core the holoenzyme is formed, which can initiate transcription.

The enzyme catalyses RNA(n) + a ribonucleoside 5'-triphosphate = RNA(n+1) + diphosphate. DNA-dependent RNA polymerase catalyzes the transcription of DNA into RNA using the four ribonucleoside triphosphates as substrates. This chain is DNA-directed RNA polymerase subunit alpha, found in Aromatoleum aromaticum (strain DSM 19018 / LMG 30748 / EbN1) (Azoarcus sp. (strain EbN1)).